The sequence spans 340 residues: Glyceraldehyde-3-phosphate dehydrogenase, cytosolic (340 aa).

Residues 16–17 (RI), Asp-38, and Arg-85 contribute to the NAD(+) site. D-glyceraldehyde 3-phosphate contacts are provided by residues 156 to 158 (SCT), Thr-187, 216 to 217 (TG), and Arg-239. The active-site Nucleophile is Cys-157. An NAD(+)-binding site is contributed by Asn-321.

Belongs to the glyceraldehyde-3-phosphate dehydrogenase family. In terms of assembly, homotetramer.

Its subcellular location is the cytoplasm. It catalyses the reaction D-glyceraldehyde 3-phosphate + phosphate + NAD(+) = (2R)-3-phospho-glyceroyl phosphate + NADH + H(+). It participates in carbohydrate degradation; glycolysis; pyruvate from D-glyceraldehyde 3-phosphate: step 1/5. Its function is as follows. Key enzyme in glycolysis that catalyzes the first step of the pathway by converting D-glyceraldehyde 3-phosphate (G3P) into 3-phospho-D-glyceroyl phosphate. Essential for the maintenance of cellular ATP levels and carbohydrate metabolism. This chain is Glyceraldehyde-3-phosphate dehydrogenase, cytosolic, found in Ginkgo biloba (Ginkgo).